The primary structure comprises 1053 residues: Sal-like protein 4 (1053 aa).

Residues 1 to 62 (MSRRKQAKPQ…DEVASEDEAT (62 aa)) are disordered. Over residues 20-46 (EQQPQQQTPEFADAAPAAPAAGELGAP) the composition is skewed to low complexity. Ser-57 carries the post-translational modification Phosphoserine. A C2H2-type 1; atypical zinc finger spans residues 72–94 (HVCEKCCAEFFSISEFLEHKKNC). A disordered region spans residues 116-149 (SGAVLSHQPTSPGSKDCHRENGGSSEDMKEKPDA). A compositionally biased stretch (basic and acidic residues) spans 130–149 (KDCHRENGGSSEDMKEKPDA). Lys-156 participates in a covalent cross-link: Glycyl lysine isopeptide (Lys-Gly) (interchain with G-Cter in SUMO1); alternate. A Glycyl lysine isopeptide (Lys-Gly) (interchain with G-Cter in SUMO2); alternate cross-link involves residue Lys-156. Glycyl lysine isopeptide (Lys-Gly) (interchain with G-Cter in SUMO2) cross-links involve residues Lys-175, Lys-190, and Lys-290. Ser-307 bears the Phosphoserine mark. Lys-316 participates in a covalent cross-link: Glycyl lysine isopeptide (Lys-Gly) (interchain with G-Cter in SUMO1); alternate. Lys-316 is covalently cross-linked (Glycyl lysine isopeptide (Lys-Gly) (interchain with G-Cter in SUMO2); alternate). Lys-372 participates in a covalent cross-link: Glycyl lysine isopeptide (Lys-Gly) (interchain with G-Cter in SUMO2). Residue Lys-374 forms a Glycyl lysine isopeptide (Lys-Gly) (interchain with G-Cter in SUMO1); alternate linkage. Lys-374 participates in a covalent cross-link: Glycyl lysine isopeptide (Lys-Gly) (interchain with G-Cter in SUMO2); alternate. 2 consecutive C2H2-type zinc fingers follow at residues 382 to 404 (HKCKYCSKVFGTDSSLQIHLRSH) and 410 to 432 (FVCSVCGHRFTTKGNLKVHFHRH). Lys-436 is covalently cross-linked (Glycyl lysine isopeptide (Lys-Gly) (interchain with G-Cter in SUMO2)). The span at 483–496 (VGLPQNLSSGTNPK) shows a compositional bias: polar residues. The segment at 483-546 (VGLPQNLSSG…QGSGTPEPGS (64 aa)) is disordered. Position 541 is a phosphothreonine (Thr-541). Lys-550 participates in a covalent cross-link: Glycyl lysine isopeptide (Lys-Gly) (interchain with G-Cter in SUMO2). 2 C2H2-type zinc fingers span residues 566 to 588 (NECLICHRVLSCQSSLKMHYRTH) and 594 to 616 (FQCKICGRAFSTKGNLKTHLGVH). Glycyl lysine isopeptide (Lys-Gly) (interchain with G-Cter in SUMO2) cross-links involve residues Lys-597 and Lys-623. A C2H2-type 6 zinc finger spans residues 626-648 (HSCPICQKKFTNAVMLQQHIRMH). Disordered stretches follow at residues 694–714 (EEVSSQEAPSSSSKVPTPLPS), 736–776 (VGPA…QSRS), and 788–828 (LSPA…LPST). Residues 698-708 (SQEAPSSSSKV) show a composition bias toward low complexity. 2 stretches are compositionally biased toward polar residues: residues 743 to 776 (LQRQGSRENGSVESDGLTNDSSSLMGDQEYQSRS) and 788 to 797 (LSPANSQAES). Residues Ser-776 and Ser-789 each carry the phosphoserine modification. Basic and acidic residues predominate over residues 810-821 (ESSENSRTEMEG). Lys-838 participates in a covalent cross-link: Glycyl lysine isopeptide (Lys-Gly) (interchain with G-Cter in SUMO1); alternate. Residue Lys-838 forms a Glycyl lysine isopeptide (Lys-Gly) (interchain with G-Cter in SUMO2); alternate linkage. Position 852 is a phosphoserine (Ser-852). A C2H2-type 7 zinc finger spans residues 870-892 (HGCTRCGKNFSSASALQIHERTH). A Glycyl lysine isopeptide (Lys-Gly) (interchain with G-Cter in SUMO2) cross-link involves residue Lys-896. The C2H2-type 8 zinc finger occupies 898–920 (FVCNICGRAFTTKGNLKVHYMTH). Glycyl lysine isopeptide (Lys-Gly) (interchain with G-Cter in SUMO2) cross-links involve residues Lys-932 and Lys-947. The tract at residues 1018 to 1039 (GSQSGISADVEKPSATDGVPKH) is disordered. Ser-1019 carries the phosphoserine modification.

Belongs to the sal C2H2-type zinc-finger protein family. As to quaternary structure, interacts with POU5F1/OCT4. Interacts with NANOG. Interacts with BEND3. Interacts with NSD2 (via PHD-type zinc fingers 1, 2 and 3). Interacts with NRBP1. Post-translationally, isoform SALL4B exists primarily as a ubiquitinated form. Sumoylation with both SUMO1 and SUMO2 regulates the stability, subcellular localization, transcriptional activity, and may reduce interaction with POU5F1/OCT4. In terms of tissue distribution, expressed in testis. Constitutively expressed in acute myeloid leukemia (AML).

It is found in the cytoplasm. The protein resides in the nucleus. Functionally, transcription factor with a key role in the maintenance and self-renewal of embryonic and hematopoietic stem cells. In Homo sapiens (Human), this protein is Sal-like protein 4 (SALL4).